The primary structure comprises 562 residues: Dihydroxy-acid dehydratase (562 aa).

D80 lines the Mg(2+) pocket. Residue C121 coordinates [2Fe-2S] cluster. Mg(2+) contacts are provided by D122 and K123. Residue K123 is modified to N6-carboxylysine. Position 194 (C194) interacts with [2Fe-2S] cluster. E446 is a binding site for Mg(2+). Catalysis depends on S472, which acts as the Proton acceptor.

The protein belongs to the IlvD/Edd family. In terms of assembly, homodimer. The cofactor is [2Fe-2S] cluster. Requires Mg(2+) as cofactor.

It catalyses the reaction (2R)-2,3-dihydroxy-3-methylbutanoate = 3-methyl-2-oxobutanoate + H2O. It carries out the reaction (2R,3R)-2,3-dihydroxy-3-methylpentanoate = (S)-3-methyl-2-oxopentanoate + H2O. It functions in the pathway amino-acid biosynthesis; L-isoleucine biosynthesis; L-isoleucine from 2-oxobutanoate: step 3/4. It participates in amino-acid biosynthesis; L-valine biosynthesis; L-valine from pyruvate: step 3/4. Functions in the biosynthesis of branched-chain amino acids. Catalyzes the dehydration of (2R,3R)-2,3-dihydroxy-3-methylpentanoate (2,3-dihydroxy-3-methylvalerate) into 2-oxo-3-methylpentanoate (2-oxo-3-methylvalerate) and of (2R)-2,3-dihydroxy-3-methylbutanoate (2,3-dihydroxyisovalerate) into 2-oxo-3-methylbutanoate (2-oxoisovalerate), the penultimate precursor to L-isoleucine and L-valine, respectively. The sequence is that of Dihydroxy-acid dehydratase from Staphylococcus haemolyticus (strain JCSC1435).